A 213-amino-acid chain; its full sequence is Protein DMP4 (213 aa).

A run of 4 helical transmembrane segments spans residues 51-71, 78-98, 142-162, and 180-200; these read LANL…PIFS, LVSK…CFIL, FIDF…VLFD, and VLTA…ATFP.

Belongs to the plant DMP1 protein family. In terms of tissue distribution, expressed in leaves, flowers and siliques, especially in vascular tissues.

The protein localises to the vacuole membrane. In terms of biological role, involved in membrane remodeling. In Arabidopsis thaliana (Mouse-ear cress), this protein is Protein DMP4.